The sequence spans 170 residues: uncharacterized protein (170 aa).

This is an uncharacterized protein from Myxococcus xanthus.